Reading from the N-terminus, the 192-residue chain is Casparian strip membrane protein 2 (192 aa).

Residues 1 to 31 (MTKDVVVEHGESSKAPLVAAPAASGVGRAAS) lie on the Cytoplasmic side of the membrane. A helical membrane pass occupies residues 32–52 (VADVFLRFLAIVGTIASAISM). The Extracellular segment spans residues 53–79 (GTTNETLPFFTQFIQFEAKYSDLPSFT). The N-linked (GlcNAc...) asparagine glycan is linked to Asn-56. A helical membrane pass occupies residues 80-100 (FFVAANAVVCTYLVLSIPLSI). Topologically, residues 101 to 112 (VHIVRPRARYSR) are cytoplasmic. The chain crosses the membrane as a helical span at residues 113-133 (LVLVFFDAAMLTLLTAGASAA). Residues 134 to 166 (AAIVYLAHKGNVRANWFAICQQFDSFCERISGS) lie on the Extracellular side of the membrane. Residues 167–187 (LIGSFAAMVLLIMLIFLSAFA) form a helical membrane-spanning segment. The Cytoplasmic portion of the chain corresponds to 188–192 (LARRH).

It belongs to the Casparian strip membrane proteins (CASP) family. Homodimer and heterodimers.

It localises to the cell membrane. Regulates membrane-cell wall junctions and localized cell wall deposition. Required for establishment of the Casparian strip membrane domain (CSD) and the subsequent formation of Casparian strips, a cell wall modification of the root endodermis that determines an apoplastic barrier between the intraorganismal apoplasm and the extraorganismal apoplasm and prevents lateral diffusion. This chain is Casparian strip membrane protein 2, found in Panicum virgatum (Blackwell switchgrass).